Here is a 496-residue protein sequence, read N- to C-terminus: Probable 26S proteasome non-ATPase regulatory subunit 3 (496 aa).

Positions alanine 249–aspartate 428 constitute a PCI domain. Residues arginine 458–glutamine 480 form a disordered region. A compositionally biased stretch (basic and acidic residues) spans tyrosine 464–glutamine 480.

Belongs to the proteasome subunit S3 family. The 26S proteasome is composed of a core protease, known as the 20S proteasome, capped at one or both ends by the 19S regulatory complex (RC). The RC is composed of at least 18 different subunits in two subcomplexes, the base and the lid, which form the portions proximal and distal to the 20S proteolytic core, respectively.

Functionally, acts as a regulatory subunit of the 26 proteasome which is involved in the ATP-dependent degradation of ubiquitinated proteins. The protein is Probable 26S proteasome non-ATPase regulatory subunit 3 (Dox-A2) of Anopheles gambiae (African malaria mosquito).